A 204-amino-acid polypeptide reads, in one-letter code: 3-isopropylmalate dehydratase small subunit (204 aa).

Belongs to the LeuD family. LeuD type 1 subfamily. In terms of assembly, heterodimer of LeuC and LeuD.

The catalysed reaction is (2R,3S)-3-isopropylmalate = (2S)-2-isopropylmalate. It functions in the pathway amino-acid biosynthesis; L-leucine biosynthesis; L-leucine from 3-methyl-2-oxobutanoate: step 2/4. Functionally, catalyzes the isomerization between 2-isopropylmalate and 3-isopropylmalate, via the formation of 2-isopropylmaleate. This is 3-isopropylmalate dehydratase small subunit from Psychromonas ingrahamii (strain DSM 17664 / CCUG 51855 / 37).